Consider the following 434-residue polypeptide: UDP-N-acetylmuramate--L-alanine ligase (434 aa).

Position 110–116 (glycine 110–serine 116) interacts with ATP.

Belongs to the MurCDEF family.

It localises to the cytoplasm. The catalysed reaction is UDP-N-acetyl-alpha-D-muramate + L-alanine + ATP = UDP-N-acetyl-alpha-D-muramoyl-L-alanine + ADP + phosphate + H(+). It functions in the pathway cell wall biogenesis; peptidoglycan biosynthesis. Cell wall formation. The protein is UDP-N-acetylmuramate--L-alanine ligase of Limosilactobacillus reuteri (strain DSM 20016) (Lactobacillus reuteri).